The sequence spans 101 residues: Large ribosomal subunit protein uL24 (101 aa).

Belongs to the universal ribosomal protein uL24 family. As to quaternary structure, part of the 50S ribosomal subunit.

Functionally, one of two assembly initiator proteins, it binds directly to the 5'-end of the 23S rRNA, where it nucleates assembly of the 50S subunit. Its function is as follows. One of the proteins that surrounds the polypeptide exit tunnel on the outside of the subunit. The protein is Large ribosomal subunit protein uL24 of Clostridioides difficile (strain 630) (Peptoclostridium difficile).